The sequence spans 315 residues: Replication factor C small subunit (315 aa).

Residue G43 to T50 participates in ATP binding.

The protein belongs to the activator 1 small subunits family. RfcS subfamily. In terms of assembly, heteromultimer composed of small subunits (RfcS) and large subunits (RfcL).

Its function is as follows. Part of the RFC clamp loader complex which loads the PCNA sliding clamp onto DNA. In Methanococcus maripaludis (strain C5 / ATCC BAA-1333), this protein is Replication factor C small subunit.